Here is a 108-residue protein sequence, read N- to C-terminus: CDGSH iron-sulfur domain-containing protein 1 (108 aa).

The chain crosses the membrane as a helical; Signal-anchor for type III membrane protein span at residues 13-31; the sequence is WIAAVTFAAGTAALGYLAY. Residues 32–108 lie on the Cytoplasmic side of the membrane; the sequence is KKFYAKESRT…GPLIIKKKET (77 aa). Lys42 is covalently cross-linked (Glycyl lysine isopeptide (Lys-Gly) (interchain with G-Cter in ubiquitin)). Residue Lys55 is the Schiff-base intermediate with pyridoxal 5'-phosphate of the active site. 2 positions are modified to N6-acetyllysine; alternate: Lys55 and Lys68. Residues Lys55 and Lys68 each participate in a glycyl lysine isopeptide (Lys-Gly) (interchain with G-Cter in ubiquitin); alternate cross-link. The [2Fe-2S] cluster site is built by Cys72 and Cys74. Glycyl lysine isopeptide (Lys-Gly) (interchain with G-Cter in ubiquitin) cross-links involve residues Lys78 and Lys79. Residues Cys83 and His87 each contribute to the [2Fe-2S] cluster site. A Glycyl lysine isopeptide (Lys-Gly) (interchain with G-Cter in ubiquitin) cross-link involves residue Lys89. Residue Lys104 is modified to N6-acetyllysine; alternate. Lys104 participates in a covalent cross-link: Glycyl lysine isopeptide (Lys-Gly) (interchain with G-Cter in ubiquitin); alternate. Residues Lys105 and Lys106 each participate in a glycyl lysine isopeptide (Lys-Gly) (interchain with G-Cter in ubiquitin) cross-link.

It belongs to the CISD protein family. In terms of assembly, homodimer. Requires [2Fe-2S] cluster as cofactor. It depends on pyridoxal 5'-phosphate as a cofactor. Ubiquitinated by PRKN during mitophagy, leading to its degradation and enhancement of mitophagy. Deubiquitinated by USP30.

Its subcellular location is the mitochondrion outer membrane. It carries out the reaction L-cysteine + 2-oxoglutarate = 2-oxo-3-sulfanylpropanoate + L-glutamate. L-cysteine transaminase that catalyzes the reversible transfer of the amino group from L-cysteine to the alpha-keto acid 2-oxoglutarate to respectively form 2-oxo-3-sulfanylpropanoate and L-glutamate. The catalytic cycle occurs in the presence of pyridoxal 5'-phosphate (PLP) cofactor that facilitates transamination by initially forming an internal aldimine with the epsilon-amino group of active site Lys-55 residue on the enzyme (PLP-enzyme aldimine), subsequently displaced by formation of an external aldimine with the substrate amino group (PLP-L-cysteine aldimine). The external aldimine is further deprotonated to form a carbanion intermediate, which in the presence of 2-oxoglutarate regenerates PLP yielding final products 2-oxo-3-sulfanylpropanoate and L-glutamate. The proton transfer in carbanion intermediate is suggested to be controlled by the active site lysine residue, whereas PLP stabilizes carbanion structure through electron delocalization, also known as the electron sink effect. Plays a key role in regulating maximal capacity for electron transport and oxidative phosphorylation. May be involved in iron-sulfur cluster shuttling and/or in redox reactions. Can transfer the [2Fe-2S] cluster to an apo-acceptor protein only when in the oxidation state, likely serving as a redox sensor that regulates mitochondrial iron-sulfur cluster assembly and iron trafficking upon oxidative stress. The chain is CDGSH iron-sulfur domain-containing protein 1 (Cisd1) from Rattus norvegicus (Rat).